A 199-amino-acid chain; its full sequence is Fe/S biogenesis protein NfuA (199 aa).

Cysteine 151 and cysteine 154 together coordinate [4Fe-4S] cluster.

Belongs to the NfuA family. Homodimer. [4Fe-4S] cluster is required as a cofactor.

Its function is as follows. Involved in iron-sulfur cluster biogenesis. Binds a 4Fe-4S cluster, can transfer this cluster to apoproteins, and thereby intervenes in the maturation of Fe/S proteins. Could also act as a scaffold/chaperone for damaged Fe/S proteins. This chain is Fe/S biogenesis protein NfuA, found in Xylella fastidiosa (strain M12).